The sequence spans 488 residues: ATP synthase subunit beta (488 aa).

164–171 contributes to the ATP binding site; sequence GGAGVGKT.

This sequence belongs to the ATPase alpha/beta chains family. In terms of assembly, F-type ATPases have 2 components, CF(1) - the catalytic core - and CF(0) - the membrane proton channel. CF(1) has five subunits: alpha(3), beta(3), gamma(1), delta(1), epsilon(1). CF(0) has four main subunits: a(1), b(1), b'(1) and c(9-12).

The protein localises to the cellular thylakoid membrane. It catalyses the reaction ATP + H2O + 4 H(+)(in) = ADP + phosphate + 5 H(+)(out). In terms of biological role, produces ATP from ADP in the presence of a proton gradient across the membrane. The catalytic sites are hosted primarily by the beta subunits. This Prochlorococcus marinus (strain SARG / CCMP1375 / SS120) protein is ATP synthase subunit beta.